A 581-amino-acid polypeptide reads, in one-letter code: MITTLYKEPASFAHEFSNINLLWASLFIEELVRNGISDFCIAPGSRSTPLTLAADQHTEAHTHVHFDERGLGFLALGLSLFSHKPVVIITTSGTAVANLYPAVIEAKLSAIPLIILSADRPVELIDCGANQAIDQYRIFSHYPVFFAQIPSATTHIKPNYLLTTINQGLQQQRQTPAAIHFNIAFSEPLYPQTATLNYQGYLQSLKQWLIDKQPFSQYFQNKDSFQAASNTQLRDKKVLVIAGRVTGINQAQAIAEFAALNNYPLLADLQSALTGNANNLHYYDLLLVNKQFTENLQQADIIVQFGGKLISKRLSQFIEGFAGEYLLVDPGNTRIDPAHSLRKRFVCSATQWIKSLQNKIPDIDKHWSQVLQQQNNYITKQIISPFLDNNLISEISVISALDKLLPADNPVFIGNSMPVRLSDMFFRQNAALPFSNRGASGIDGLLATASGIAKSCASITTLLIGDTSFLHDLNSLALLKQLQGPFVIIVFNNDGGAIFNLLPVPTQQKQDYYQLPHGLTFADSCRQFSIDYYQPESLDQFVGDYQKSLQNRLSLIEICVKNDQTYNHLEYIKEQIKYATF.

This sequence belongs to the TPP enzyme family. MenD subfamily. As to quaternary structure, homodimer. The cofactor is Mg(2+). It depends on Mn(2+) as a cofactor. Thiamine diphosphate serves as cofactor.

It catalyses the reaction isochorismate + 2-oxoglutarate + H(+) = 5-enolpyruvoyl-6-hydroxy-2-succinyl-cyclohex-3-ene-1-carboxylate + CO2. It participates in quinol/quinone metabolism; 1,4-dihydroxy-2-naphthoate biosynthesis; 1,4-dihydroxy-2-naphthoate from chorismate: step 2/7. The protein operates within quinol/quinone metabolism; menaquinone biosynthesis. In terms of biological role, catalyzes the thiamine diphosphate-dependent decarboxylation of 2-oxoglutarate and the subsequent addition of the resulting succinic semialdehyde-thiamine pyrophosphate anion to isochorismate to yield 2-succinyl-5-enolpyruvyl-6-hydroxy-3-cyclohexene-1-carboxylate (SEPHCHC). The chain is 2-succinyl-5-enolpyruvyl-6-hydroxy-3-cyclohexene-1-carboxylate synthase from Psychromonas ingrahamii (strain DSM 17664 / CCUG 51855 / 37).